Here is a 96-residue protein sequence, read N- to C-terminus: Co-chaperonin GroES (96 aa).

Belongs to the GroES chaperonin family. As to quaternary structure, heptamer of 7 subunits arranged in a ring. Interacts with the chaperonin GroEL.

The protein resides in the cytoplasm. Together with the chaperonin GroEL, plays an essential role in assisting protein folding. The GroEL-GroES system forms a nano-cage that allows encapsulation of the non-native substrate proteins and provides a physical environment optimized to promote and accelerate protein folding. GroES binds to the apical surface of the GroEL ring, thereby capping the opening of the GroEL channel. In Syntrophomonas wolfei subsp. wolfei (strain DSM 2245B / Goettingen), this protein is Co-chaperonin GroES.